The following is a 339-amino-acid chain: Deubiquitinase and deneddylase Dub2 (339 aa).

The chain crosses the membrane as a helical span at residues 36 to 56 (IIIALFLIVISCGLILCAYTF). Catalysis depends on residues histidine 203, aspartate 220, and cysteine 282.

The protein belongs to the peptidase C48 family.

It localises to the secreted. Its subcellular location is the host cell. The protein localises to the membrane. Functionally, effector proteins function to alter host cell physiology and promote bacterial survival in host tissues. This protease possesses deubiquitinating and deneddylating activities. The sequence is that of Deubiquitinase and deneddylase Dub2 (cdu2) from Chlamydia trachomatis serovar D (strain ATCC VR-885 / DSM 19411 / UW-3/Cx).